The sequence spans 232 residues: Vesicle transport through interaction with t-SNAREs homolog 1B (232 aa).

Position 2 is an N-acetylalanine (Ala-2). 2 interaction with CLINT1 regions span residues Ala-2 to Glu-23 and Ala-69 to Phe-73. At Ala-2–Leu-208 the chain is on the cytoplasmic side. Residues Met-35–Thr-98 are a coiled coil. Thr-103 is subject to Phosphothreonine. Arg-107 is subject to Omega-N-methylarginine. Position 138 is a phosphoserine (Ser-138). Residues Ser-161 to Met-198 adopt a coiled-coil conformation. A helical; Anchor for type IV membrane protein transmembrane segment spans residues Leu-209–Leu-229. Topologically, residues Arg-230–His-232 are vesicular.

The protein belongs to the VTI1 family. Forms a SNARE complex with STX7, STX8 and VAMP8 which functions in the homotypic fusion of late endosomes. Component of the SNARE complex composed of STX7, STX8, VAMP7 and VIT1B that is required for heterotypic fusion of late endosomes with lysosomes. May interact with STX17. Interacts with CLINT1.

Its subcellular location is the early endosome membrane. The protein localises to the late endosome membrane. It localises to the lysosome membrane. It is found in the cytoplasmic granule. The protein resides in the recycling endosome membrane. In terms of biological role, V-SNARE that mediates vesicle transport pathways through interactions with t-SNAREs on the target membrane. These interactions are proposed to mediate aspects of the specificity of vesicle trafficking and to promote fusion of the lipid bilayers. May be concerned with increased secretion of cytokines associated with cellular senescence. The sequence is that of Vesicle transport through interaction with t-SNAREs homolog 1B (VTI1B) from Bos taurus (Bovine).